The primary structure comprises 391 residues: 23S rRNA (uracil(747)-C(5))-methyltransferase RlmC (391 aa).

The [4Fe-4S] cluster site is built by C5, C13, C16, and C95. 4 residues coordinate S-adenosyl-L-methionine: Q220, F249, E276, and N322. Catalysis depends on C349, which acts as the Nucleophile.

Belongs to the class I-like SAM-binding methyltransferase superfamily. RNA M5U methyltransferase family. RlmC subfamily.

The enzyme catalyses uridine(747) in 23S rRNA + S-adenosyl-L-methionine = 5-methyluridine(747) in 23S rRNA + S-adenosyl-L-homocysteine + H(+). Functionally, catalyzes the formation of 5-methyl-uridine at position 747 (m5U747) in 23S rRNA. The chain is 23S rRNA (uracil(747)-C(5))-methyltransferase RlmC from Actinobacillus pleuropneumoniae serotype 3 (strain JL03).